Consider the following 1025-residue polypeptide: Multidrug resistance protein MdtC (1025 aa).

12 helical membrane passes run 3–23 (FFAL…AITL), 333–353 (EVEQ…FLFL), 360–380 (IIPA…MYLC), 387–407 (LSLM…IVVL), 431–451 (VGFT…PLLL), 463–483 (FAVT…TLTP), 528–548 (LVGM…ISIP), 853–873 (VILI…LYES), 875–895 (VHPL…LLAL), 897–917 (LFNA…IGIV), 953–973 (PIMM…LSGG), and 984–1004 (ITIV…TPVV).

The protein belongs to the resistance-nodulation-cell division (RND) (TC 2.A.6) family. MdtC subfamily. In terms of assembly, part of a tripartite efflux system composed of MdtA, MdtB and MdtC. MdtC forms a heteromultimer with MdtB.

It localises to the cell inner membrane. Functionally, the MdtABC tripartite complex confers resistance against novobiocin and deoxycholate. The polypeptide is Multidrug resistance protein MdtC (Escherichia coli O157:H7 (strain EC4115 / EHEC)).